Reading from the N-terminus, the 591-residue chain is Aspartate--tRNA(Asp/Asn) ligase (591 aa).

Residue Glu174 participates in L-aspartate binding. The segment at 198–201 (QLFK) is aspartate. Arg220 lines the L-aspartate pocket. ATP is bound by residues 220–222 (RDE) and Gln229. His450 contacts L-aspartate. Glu483 is a binding site for ATP. Position 490 (Arg490) interacts with L-aspartate. 535–538 (GLDR) lines the ATP pocket.

It belongs to the class-II aminoacyl-tRNA synthetase family. Type 1 subfamily. Homodimer.

It localises to the cytoplasm. It catalyses the reaction tRNA(Asx) + L-aspartate + ATP = L-aspartyl-tRNA(Asx) + AMP + diphosphate. Aspartyl-tRNA synthetase with relaxed tRNA specificity since it is able to aspartylate not only its cognate tRNA(Asp) but also tRNA(Asn). Reaction proceeds in two steps: L-aspartate is first activated by ATP to form Asp-AMP and then transferred to the acceptor end of tRNA(Asp/Asn). The chain is Aspartate--tRNA(Asp/Asn) ligase from Pseudomonas putida (strain ATCC 700007 / DSM 6899 / JCM 31910 / BCRC 17059 / LMG 24140 / F1).